Consider the following 646-residue polypeptide: Phosphomethylpyrimidine synthase (646 aa).

A compositionally biased stretch (polar residues) spans 1–13; the sequence is MNIRSNPDTTRPA. Positions 1 to 21 are disordered; it reads MNIRSNPDTTRPAVTTGGLPS. Residues Asn-221, Met-250, Tyr-279, His-315, 335–337, 376–379, and Glu-415 contribute to the substrate site; these read SRG and DGLR. Residue His-419 coordinates Zn(2+). A substrate-binding site is contributed by Tyr-442. Residue His-483 coordinates Zn(2+). [4Fe-4S] cluster is bound by residues Cys-563, Cys-566, and Cys-571.

This sequence belongs to the ThiC family. As to quaternary structure, homodimer. [4Fe-4S] cluster is required as a cofactor.

The catalysed reaction is 5-amino-1-(5-phospho-beta-D-ribosyl)imidazole + S-adenosyl-L-methionine = 4-amino-2-methyl-5-(phosphooxymethyl)pyrimidine + CO + 5'-deoxyadenosine + formate + L-methionine + 3 H(+). It participates in cofactor biosynthesis; thiamine diphosphate biosynthesis. Its function is as follows. Catalyzes the synthesis of the hydroxymethylpyrimidine phosphate (HMP-P) moiety of thiamine from aminoimidazole ribotide (AIR) in a radical S-adenosyl-L-methionine (SAM)-dependent reaction. The polypeptide is Phosphomethylpyrimidine synthase (Rhodopseudomonas palustris (strain HaA2)).